The chain runs to 552 residues: MEKVQQTIRAPRGTELQTKGWVQEAALRMLMNNLDPEVAEKPEELVVYGGIGRAARNWESYQAIVDSLKTLESDETLLVQSGKPVAIFKSHEDAPRVLLANSNLVPKWANWDHFRELEKKGLMMYGQMTAGSWIYIGTQGILQGTYETFGEAARQHFDGSLKGTLTLTAGLGGMGGAQPLAVTMNGGVVIAIDVDKRSIDRRIEKRYCDMYTESLEEALTVANEYKEKREPISIGLLGNAAEILPELVKRNITPDLVTDQTSAHDPLNGYIPVGYTLEEAAKLREEDPERYVQLSKESMTKHVEAMLAMQEKGAITFDYGNNIRQVAFDEGLKNAFDFPGFVPAFIRPLFCEGKGPFRWVALSGDPEDIYKTDEVILREFADNEHLCNWIRMARQQVEFQGLPSRICWLGYGERAKFGRIINEMVANGELSAPIVIGRDHLDCGSVASPNRETEAMKDGSDAVADWPILNALINSVNGASWVSVHHGGGVGMGYSLHAGMVIVADGTEAAAKRIERVLTSDPGMGVVRHVDAGYDLAVETAKEKGVNIPMMK.

NAD(+)-binding positions include 49–50 (GG), glutamine 127, 173–175 (GMG), aspartate 193, 239–240 (NA), 260–264 (QTSAH), 270–271 (YI), and tyrosine 319. Cysteine 407 is an active-site residue. Glycine 489 contacts NAD(+).

Belongs to the urocanase family. It depends on NAD(+) as a cofactor.

It localises to the cytoplasm. The enzyme catalyses 4-imidazolone-5-propanoate = trans-urocanate + H2O. Its pathway is amino-acid degradation; L-histidine degradation into L-glutamate; N-formimidoyl-L-glutamate from L-histidine: step 2/3. Catalyzes the conversion of urocanate to 4-imidazolone-5-propionate. This is Urocanate hydratase from Bacillus cereus (strain ATCC 14579 / DSM 31 / CCUG 7414 / JCM 2152 / NBRC 15305 / NCIMB 9373 / NCTC 2599 / NRRL B-3711).